A 287-amino-acid chain; its full sequence is Probable ABC transporter extracellular-binding protein YckB (287 aa).

The signal sequence occupies residues 1 to 24 (MKSFMHSKAVIFSFTMAFFLILAA). Residue Cys25 is the site of N-palmitoyl cysteine attachment. Cys25 carries the S-diacylglycerol cysteine lipid modification.

This sequence belongs to the bacterial solute-binding protein 3 family.

Its subcellular location is the cell membrane. Its function is as follows. Probably part of a binding-protein-dependent transport system. The chain is Probable ABC transporter extracellular-binding protein YckB (yckB) from Bacillus subtilis (strain 168).